The primary structure comprises 253 residues: uncharacterized protein (253 aa).

Positions 1–19 (MRYLKRITIYISLLILVSG) are cleaved as a signal peptide. Cysteine 20 is lipidated: N-palmitoyl cysteine. The S-diacylglycerol cysteine moiety is linked to residue cysteine 20.

Belongs to the staphylococcal tandem lipoprotein family.

It localises to the cell membrane. This is an uncharacterized protein from Staphylococcus epidermidis (strain ATCC 12228 / FDA PCI 1200).